The sequence spans 145 residues: D-aminoacyl-tRNA deacylase (145 aa).

Residues 137-138 (GP) carry the Gly-cisPro motif, important for rejection of L-amino acids motif.

It belongs to the DTD family. In terms of assembly, homodimer.

It is found in the cytoplasm. It catalyses the reaction glycyl-tRNA(Ala) + H2O = tRNA(Ala) + glycine + H(+). The catalysed reaction is a D-aminoacyl-tRNA + H2O = a tRNA + a D-alpha-amino acid + H(+). Functionally, an aminoacyl-tRNA editing enzyme that deacylates mischarged D-aminoacyl-tRNAs. Also deacylates mischarged glycyl-tRNA(Ala), protecting cells against glycine mischarging by AlaRS. Acts via tRNA-based rather than protein-based catalysis; rejects L-amino acids rather than detecting D-amino acids in the active site. By recycling D-aminoacyl-tRNA to D-amino acids and free tRNA molecules, this enzyme counteracts the toxicity associated with the formation of D-aminoacyl-tRNA entities in vivo and helps enforce protein L-homochirality. The sequence is that of D-aminoacyl-tRNA deacylase from Shewanella sp. (strain MR-4).